The primary structure comprises 390 residues: Olfactomedin-like protein 3A (390 aa).

Residues 1-17 form the signal peptide; the sequence is MRALQLLVLVLSGLVGA. A coiled-coil region spans residues 18 to 91; that stretch reads QQQALMDYLE…RVDRVEREMD (74 aa). An Olfactomedin-like domain is found at 130–386; sequence DCSDMISSIK…QILYKLQLKK (257 aa). A disulfide bond links Cys-131 and Cys-313. A glycan (N-linked (GlcNAc...) asparagine) is linked at Asn-169.

This sequence belongs to the OLFML3 family.

The protein resides in the secreted. Secreted scaffold protein that plays an essential role in dorsoventral patterning during early development. Stabilizes axial formation by restricting chordin (CHRD) activity on the dorsal side. Acts by facilitating the association between the tolloid proteases and their substrate chordin (CHRD), leading to enhance chordin (CHRD) degradation. This chain is Olfactomedin-like protein 3A (olfml3a), found in Danio rerio (Zebrafish).